The sequence spans 985 residues: Probable beta-galactosidase C (985 aa).

The N-terminal stretch at 1–23 (MRILSLLFLLLLGFLAGNRVVSA) is a signal peptide. Substrate contacts are provided by Tyr-82, Asn-127, Ala-128, Glu-129, and Asn-187. The active-site Proton donor is the Glu-188. Tyr-251 contacts substrate. Cys-257 and Cys-304 are oxidised to a cystine. Asn-276 carries N-linked (GlcNAc...) asparagine glycosylation. Glu-287 (nucleophile) is an active-site residue. Residue Tyr-353 coordinates substrate. N-linked (GlcNAc...) asparagine glycosylation is found at Asn-391, Asn-434, Asn-517, Asn-602, Asn-677, Asn-715, Asn-720, and Asn-759.

Belongs to the glycosyl hydrolase 35 family.

The protein resides in the secreted. The enzyme catalyses Hydrolysis of terminal non-reducing beta-D-galactose residues in beta-D-galactosides.. Cleaves beta-linked terminal galactosyl residues from gangliosides, glycoproteins, and glycosaminoglycans. The protein is Probable beta-galactosidase C (lacC) of Aspergillus clavatus (strain ATCC 1007 / CBS 513.65 / DSM 816 / NCTC 3887 / NRRL 1 / QM 1276 / 107).